A 189-amino-acid polypeptide reads, in one-letter code: Ion-translocating oxidoreductase complex subunit B (189 aa).

A hydrophobic region spans residues 1-26; it reads MSAVMIAVVLLGLLALVFGAILGFAA. Residues 32-90 form the 4Fe-4S domain; the sequence is EGDPLVDQVESLLPQTQCGQCGYPGCRPYAEAIAGGDQINKCPPGGTATMEKIAELMGV. [4Fe-4S] cluster is bound by residues Cys49, Cys52, Cys57, Cys73, Cys114, Cys117, Cys120, Cys124, Cys144, Cys147, Cys150, and Cys154. 4Fe-4S ferredoxin-type domains follow at residues 105 to 134 and 136 to 164; these read KVAYIREDECIGCTKCIQACPVDAIVGAGK and MHTVITQDCTGCDLCVEPCPVDCIDMLPV.

It belongs to the 4Fe4S bacterial-type ferredoxin family. RnfB subfamily. As to quaternary structure, the complex is composed of six subunits: RnfA, RnfB, RnfC, RnfD, RnfE and RnfG. The cofactor is [4Fe-4S] cluster.

The protein localises to the cell inner membrane. Part of a membrane-bound complex that couples electron transfer with translocation of ions across the membrane. The sequence is that of Ion-translocating oxidoreductase complex subunit B from Shewanella amazonensis (strain ATCC BAA-1098 / SB2B).